A 718-amino-acid chain; its full sequence is D-(-)-3-hydroxybutyrate oligomer hydrolase (718 aa).

The active-site Charge relay system is the Ser-320.

It belongs to the D-(-)-3-hydroxybutyrate oligomer hydrolase family.

The protein localises to the cytoplasm. It carries out the reaction (3R)-hydroxybutanoate dimer + H2O = 2 (R)-3-hydroxybutanoate + H(+). The protein operates within lipid metabolism; butanoate metabolism. With respect to regulation, inhibited by diisopropylfluorophosphate (DFP). Functionally, participates in the degradation of poly-3-hydroxybutyrate (PHB). It works downstream of poly(3-hydroxybutyrate) depolymerase, hydrolyzing D(-)-3-hydroxybutyrate oligomers of various length (3HB-oligomers) into 3HB-monomers. Seems to have also poly(3-hydroxybutyrate) depolymerase activity since it is able to release 3HB-monomers from artificial amorphous PHB. This Cupriavidus necator (strain ATCC 17699 / DSM 428 / KCTC 22496 / NCIMB 10442 / H16 / Stanier 337) (Ralstonia eutropha) protein is D-(-)-3-hydroxybutyrate oligomer hydrolase (phaZ2).